We begin with the raw amino-acid sequence, 288 residues long: 4-diphosphocytidyl-2-C-methyl-D-erythritol kinase (288 aa).

K11 is a catalytic residue. ATP is bound at residue P95–S105. D137 is an active-site residue.

This sequence belongs to the GHMP kinase family. IspE subfamily.

The catalysed reaction is 4-CDP-2-C-methyl-D-erythritol + ATP = 4-CDP-2-C-methyl-D-erythritol 2-phosphate + ADP + H(+). It functions in the pathway isoprenoid biosynthesis; isopentenyl diphosphate biosynthesis via DXP pathway; isopentenyl diphosphate from 1-deoxy-D-xylulose 5-phosphate: step 3/6. Catalyzes the phosphorylation of the position 2 hydroxy group of 4-diphosphocytidyl-2C-methyl-D-erythritol. This chain is 4-diphosphocytidyl-2-C-methyl-D-erythritol kinase, found in Lachnospira eligens (strain ATCC 27750 / DSM 3376 / VPI C15-48 / C15-B4) (Eubacterium eligens).